A 407-amino-acid chain; its full sequence is Gonadotropin-releasing hormone receptor (407 aa).

Over 1-36 (MDYLNDSMFNNMTYNITSTPLPDAPRFDNVYVSKLC) the chain is Extracellular. 3 N-linked (GlcNAc...) asparagine glycosylation sites follow: Asn5, Asn11, and Asn15. A helical transmembrane segment spans residues 37–57 (VLGTVFVISFFGNTLVIIQIF). Topologically, residues 58–69 (RIRGSRSTIQSL) are cytoplasmic. Residues 70–90 (ILNLAIADLMVSFFNILMDII) traverse the membrane as a helical segment. Residues 91–105 (WSATVEWLAGNTMCK) are Extracellular-facing. Cys104 and Cys183 are disulfide-bonded. A helical membrane pass occupies residues 106 to 126 (IMKYLTVFGLHLSTYITVSIA). At 127 to 147 (LDRCFAILSPMSRSKAPLRVR) the chain is on the cytoplasmic side. The helical transmembrane segment at 148 to 168 (IMITMAWVLSAIFSIPQAVIF) threads the bilayer. At 169–199 (QEQRKMFRQGMFHQCRDSYNALWQKQLYSAS) the chain is on the extracellular side. A helical membrane pass occupies residues 200–220 (SLILLFVIPLIIMVTSYLLIL). Residues 221-268 (KTIVKTSRQFHDTPISPTSMSCYSVNHGQIRTHLFERARKRSSRMSAV) lie on the Cytoplasmic side of the membrane. Residues 269-289 (IVAAFILCWTPYYIIFLGFAF) form a helical membrane-spanning segment. The Extracellular portion of the chain corresponds to 290-298 (FQWDNSRTV). A helical membrane pass occupies residues 299–319 (IYFFTLGTSNCMLNPLIYGAF). Topologically, residues 320 to 407 (TIYKVHRGRS…NGKMPTKPPG (88 aa)) are cytoplasmic. The tract at residues 377-407 (SLTNPHQPVRPSPGINSTTSPNGKMPTKPPG) is disordered.

It belongs to the G-protein coupled receptor 1 family. Widely expressed in peripheral nervous tissue, gonadal tissue and brain. In the brain, expression is high in the palliovisceral lobe and superior buccal lobe but low in the subvertical lobe, superior and inferior frontal lobe, posterior brachial lobe and pedal lobe. Expressed in stomach, rectum, aorta, heart, salivary gland, branchia, pancreas, radula retractor muscle, branchial vessel but not in white body, esophagus, liver and kidney.

Its subcellular location is the cell membrane. Its function is as follows. Receptor for gonadotropin releasing hormone (GnRH) that mediates the action of GnRH to stimulate the secretion of the gonadotropic hormones luteinizing hormone (LH) and follicle-stimulating hormone (FSH). This receptor mediates its action by association with G-proteins that activate a phosphatidylinositol-calcium second messenger system. Ligand interaction triggers steroidogenesis in spermatozoa and follicles. Appears to be involved in contraction of the radula retractor muscle. This Octopus vulgaris (Common octopus) protein is Gonadotropin-releasing hormone receptor.